Reading from the N-terminus, the 177-residue chain is Large ribosomal subunit protein uL6 (177 aa).

Belongs to the universal ribosomal protein uL6 family. In terms of assembly, part of the 50S ribosomal subunit.

Its function is as follows. This protein binds to the 23S rRNA, and is important in its secondary structure. It is located near the subunit interface in the base of the L7/L12 stalk, and near the tRNA binding site of the peptidyltransferase center. In Polynucleobacter asymbioticus (strain DSM 18221 / CIP 109841 / QLW-P1DMWA-1) (Polynucleobacter necessarius subsp. asymbioticus), this protein is Large ribosomal subunit protein uL6.